Consider the following 213-residue polypeptide: Kynurenine formamidase (213 aa).

Tryptophan 18 serves as a coordination point for substrate. The Zn(2+) site is built by histidine 48, histidine 52, and aspartate 54. The Proton donor/acceptor role is filled by histidine 58. Zn(2+) contacts are provided by histidine 160 and glutamate 172.

This sequence belongs to the Cyclase 1 superfamily. KynB family. In terms of assembly, homodimer. Zn(2+) serves as cofactor.

The enzyme catalyses N-formyl-L-kynurenine + H2O = L-kynurenine + formate + H(+). It participates in amino-acid degradation; L-tryptophan degradation via kynurenine pathway; L-kynurenine from L-tryptophan: step 2/2. In terms of biological role, catalyzes the hydrolysis of N-formyl-L-kynurenine to L-kynurenine, the second step in the kynurenine pathway of tryptophan degradation. In Burkholderia lata (strain ATCC 17760 / DSM 23089 / LMG 22485 / NCIMB 9086 / R18194 / 383), this protein is Kynurenine formamidase.